The sequence spans 345 residues: N-acetyl-gamma-glutamyl-phosphate reductase (345 aa).

Cys149 is a catalytic residue.

Belongs to the NAGSA dehydrogenase family. Type 1 subfamily.

The protein localises to the cytoplasm. The enzyme catalyses N-acetyl-L-glutamate 5-semialdehyde + phosphate + NADP(+) = N-acetyl-L-glutamyl 5-phosphate + NADPH + H(+). The protein operates within amino-acid biosynthesis; L-arginine biosynthesis; N(2)-acetyl-L-ornithine from L-glutamate: step 3/4. In terms of biological role, catalyzes the NADPH-dependent reduction of N-acetyl-5-glutamyl phosphate to yield N-acetyl-L-glutamate 5-semialdehyde. This chain is N-acetyl-gamma-glutamyl-phosphate reductase, found in Bacillus mycoides (strain KBAB4) (Bacillus weihenstephanensis).